A 235-amino-acid polypeptide reads, in one-letter code: Class B acid phosphatase (235 aa).

The first 22 residues, 1–22, serve as a signal peptide directing secretion; it reads MKNLVKLSLIAMLTAATLPAMA. The Nucleophile role is filled by Asp-67. Positions 67 and 69 each coordinate Mg(2+). Asp-69 serves as the catalytic Proton donor. Residues 135-136 and Lys-175 each bind substrate; that span reads TG. Asp-190 lines the Mg(2+) pocket.

This sequence belongs to the class B bacterial acid phosphatase family. In terms of assembly, homotetramer. The cofactor is Mg(2+).

Its subcellular location is the periplasm. The catalysed reaction is a phosphate monoester + H2O = an alcohol + phosphate. Its function is as follows. Dephosphorylates several organic phosphate monoesters. Also has a phosphotransferase activity catalyzing the transfer of low-energy phosphate groups from organic phosphate monoesters to free hydroxyl groups of various organic compounds. The protein is Class B acid phosphatase of Aggregatibacter actinomycetemcomitans serotype C (strain D11S-1) (Actinobacillus actinomycetemcomitans).